The sequence spans 414 residues: MSLESFDKDIYSLVNKELERQCDHLEMIASENFTYPDVMEVMGSVLTNKYAEGYPSKRYYGGCEFVDEIEQIAIDRCKKLFGCEFANVQPNSGSQANQGVYGAFLKPGDKILGMDLSHGGHLTHGSKVSSSGKNYESFFYGVELDGRINYNKVEEIANITKPKMIVCGASAYAREIDFKKFREIADSVGAYLFADVAHIAGLVVAGEHNNPFPHCHVVSSTTHKTLRGPRGGIIMTNDEEFAKKINSSIFPGIQGGPLMHVIAGKAVGFKHNLSDEWKVYAKQVKTNAKKLGEVLINRGYDLVSGGTDNHLVLVSFLNKEFSGKDADIALGNAGITVNKNTVPGETRSPFITSGIRVGSPALTARGMKESEFELIANRIADVLDDIDNSSKQEKIKAELKELAHQFIIYDKAMF.

(6S)-5,6,7,8-tetrahydrofolate contacts are provided by residues L116 and 120-122; that span reads GHL. At K224 the chain carries N6-(pyridoxal phosphate)lysine. (6S)-5,6,7,8-tetrahydrofolate is bound by residues E240 and 348-350; that span reads SPF.

This sequence belongs to the SHMT family. Homodimer. It depends on pyridoxal 5'-phosphate as a cofactor.

Its subcellular location is the cytoplasm. The enzyme catalyses (6R)-5,10-methylene-5,6,7,8-tetrahydrofolate + glycine + H2O = (6S)-5,6,7,8-tetrahydrofolate + L-serine. The protein operates within one-carbon metabolism; tetrahydrofolate interconversion. It participates in amino-acid biosynthesis; glycine biosynthesis; glycine from L-serine: step 1/1. Catalyzes the reversible interconversion of serine and glycine with tetrahydrofolate (THF) serving as the one-carbon carrier. This reaction serves as the major source of one-carbon groups required for the biosynthesis of purines, thymidylate, methionine, and other important biomolecules. Also exhibits THF-independent aldolase activity toward beta-hydroxyamino acids, producing glycine and aldehydes, via a retro-aldol mechanism. The sequence is that of Serine hydroxymethyltransferase from Campylobacter fetus subsp. fetus (strain 82-40).